Here is a 179-residue protein sequence, read N- to C-terminus: MEAAIEFDEIVKKLLNIYINDICTMGEKRLLNNYEKSILDRIYKSCEYIKKNYELDFNSMYNQININDITTSDIKSKIIESLLIDSRPSVKLATLSFISLIAEKWGEKNRTKIMEILSNEIVEKISNNGKDFIDFIDRDDDDIVDDYVLITNYLKITIFGAILGITAYYICKYLLKSIF.

Residues 148 to 170 (VLITNYLKITIFGAILGITAYYI) form a helical membrane-spanning segment.

Interacts with host BAX and BAK1.

The protein resides in the host mitochondrion. It is found in the host membrane. Functionally, plays a role in the inhibition of host apoptosis by sequestering and inactivating several proapoptotic BCL-2 proteins, including BAK1 and BAX. Prevents the conformational activation of both of them. The chain is Apoptosis regulator DPV022 (DPV022) from Deerpox virus (strain Mule deer/United States/W-848-83/1983) (DPV).